The primary structure comprises 190 residues: Potassium-transporting ATPase KdpC subunit (190 aa).

Residues 15 to 35 form a helical membrane-spanning segment; that stretch reads LWILTALIYPAIVLVIGQLVF.

It belongs to the KdpC family. The system is composed of three essential subunits: KdpA, KdpB and KdpC.

The protein localises to the cell inner membrane. In terms of biological role, part of the high-affinity ATP-driven potassium transport (or Kdp) system, which catalyzes the hydrolysis of ATP coupled with the electrogenic transport of potassium into the cytoplasm. This subunit acts as a catalytic chaperone that increases the ATP-binding affinity of the ATP-hydrolyzing subunit KdpB by the formation of a transient KdpB/KdpC/ATP ternary complex. This Synechocystis sp. (strain ATCC 27184 / PCC 6803 / Kazusa) protein is Potassium-transporting ATPase KdpC subunit.